The following is a 202-amino-acid chain: Small ribosomal subunit protein uS4c (202 aa).

The interval Arg13 to Thr37 is disordered. Residues Gly20 to Thr37 are compositionally biased toward polar residues. The 64-residue stretch at Met90–Ile153 folds into the S4 RNA-binding domain.

It belongs to the universal ribosomal protein uS4 family. In terms of assembly, part of the 30S ribosomal subunit. Contacts protein S5. The interaction surface between S4 and S5 is involved in control of translational fidelity.

Its subcellular location is the plastid. The protein localises to the chloroplast. Functionally, one of the primary rRNA binding proteins, it binds directly to 16S rRNA where it nucleates assembly of the body of the 30S subunit. In terms of biological role, with S5 and S12 plays an important role in translational accuracy. This is Small ribosomal subunit protein uS4c (rps4) from Takakia lepidozioides (Moss).